A 364-amino-acid chain; its full sequence is Fructose-bisphosphate aldolase A (364 aa).

T9 bears the Phosphothreonine mark. Phosphoserine occurs at positions 36 and 39. Position 42 is an N6-acetyllysine; alternate (K42). K42 participates in a covalent cross-link: Glycyl lysine isopeptide (Lys-Gly) (interchain with G-Cter in SUMO1); alternate. Residue K42 forms a Glycyl lysine isopeptide (Lys-Gly) (interchain with G-Cter in SUMO2); alternate linkage. R43 is a beta-D-fructose 1,6-bisphosphate binding site. A Phosphoserine modification is found at S46. K99 carries the N6-(2-hydroxyisobutyryl)lysine modification. An N6-acetyllysine modification is found at K108. K111 carries the N6-acetyllysine; alternate modification. The residue at position 111 (K111) is an N6-malonyllysine; alternate. S132 carries the post-translational modification Phosphoserine. An N6-(2-hydroxyisobutyryl)lysine modification is found at K147. The active-site Proton acceptor is the E188. The active-site Schiff-base intermediate with dihydroxyacetone-P is the K230. Residue S272 is modified to Phosphoserine. Beta-D-fructose 1,6-bisphosphate contacts are provided by residues S272–G274, S301, and R304. K312 is modified (N6-malonyllysine). N6-acetyllysine is present on K330. N361 carries the deamidated asparagine; in form beta modification.

Belongs to the class I fructose-bisphosphate aldolase family. In terms of assembly, homotetramer. Interacts with SNX9 and WAS. Interacts with FBP2; the interaction blocks FBP2 inhibition by physiological concentrations of AMP and reduces inhibition by Ca(2+). Asn-361 in form alpha is deaminated to Asp in form beta.

Its subcellular location is the cytoplasm. It is found in the myofibril. It localises to the sarcomere. The protein resides in the i band. The protein localises to the m line. It carries out the reaction beta-D-fructose 1,6-bisphosphate = D-glyceraldehyde 3-phosphate + dihydroxyacetone phosphate. It participates in carbohydrate degradation; glycolysis; D-glyceraldehyde 3-phosphate and glycerone phosphate from D-glucose: step 4/4. Plays a key role in glycolysis and gluconeogenesis. In addition, may also function as scaffolding protein. The chain is Fructose-bisphosphate aldolase A (ALDOA) from Oryctolagus cuniculus (Rabbit).